The sequence spans 70 residues: Small ribosomal subunit protein bS21 (70 aa).

The protein belongs to the bacterial ribosomal protein bS21 family.

This chain is Small ribosomal subunit protein bS21, found in Nitratiruptor sp. (strain SB155-2).